The following is a 285-amino-acid chain: RNA 5'-monophosphate methyltransferase (285 aa).

The disordered stretch occupies residues 1 to 28 (MAATQELSKGGVEEAVEEDDPAALKPGA). Residues Arg46, Asn77, Asp111, 136-137 (DI), and Met165 each bind S-adenosyl-L-methionine. The 223-residue stretch at 53–275 (ELLRQLFPPE…KHTEETQAIP (223 aa)) folds into the Bin3-type SAM domain.

Belongs to the methyltransferase superfamily. Interacts with DICER1; the interaction may be mediated by RNA.

It localises to the cytoplasm. The enzyme catalyses a 5'-end 5'-phospho-ribonucleoside-RNA + S-adenosyl-L-methionine = a 5'-end (5'-methylphospho)-ribonucleoside-RNA + S-adenosyl-L-homocysteine. The catalysed reaction is a 5'-end 5'-phospho-ribonucleoside-RNA + 2 S-adenosyl-L-methionine = a 5'-end (5'-bismethylphospho)-ribonucleoside-RNA + 2 S-adenosyl-L-homocysteine. O-methyltransferase that specifically monomethylates 5'-monophosphate of cytoplasmic histidyl tRNA (tRNA(His)), acting as a capping enzyme by protecting tRNA(His) from cleavage by DICER1. Also able, with less efficiently, to methylate the 5' monophosphate of a subset of pre-miRNAs, acting as a negative regulator of miRNA processing. The 5' monophosphate of pre-miRNAs is recognized by DICER1 and is required for pre-miRNAs processing: methylation at this position reduces the processing of pre-miRNAs by DICER1. Was also reported to mediate dimethylation of pre-miR-145; however dimethylation cannot be reproduced by another group which observes a monomethylation of pre-miR-145. This Rattus norvegicus (Rat) protein is RNA 5'-monophosphate methyltransferase.